Reading from the N-terminus, the 110-residue chain is IQ domain-containing protein J (110 aa).

Residues 47 to 67 form the IQ domain; it reads ESKVKIIQRAWREYLQRQDPL. The tract at residues 63-99 is disordered; the sequence is RQDPLEKRSPSPPSVSSDKLSSSVSMNTFSDSSTPVS. The segment covering 76–87 has biased composition (low complexity); the sequence is SVSSDKLSSSVS. Positions 88-99 are enriched in polar residues; that stretch reads MNTFSDSSTPVS.

The chain is IQ domain-containing protein J from Mus musculus (Mouse).